A 676-amino-acid polypeptide reads, in one-letter code: Envelope glycoprotein (676 aa).

Positions 1–32 are cleaved as a signal peptide; the sequence is MGASGILQLPRERFRKTSFFVWVIILFHKVFS. At 33–650 the chain is on the extracellular side; the sequence is IPLGVVHNNT…GSNWWTGWKQ (618 aa). N-linked (GlcNAc...) asparagine; by host glycosylation occurs at asparagine 40. Cystine bridges form between cysteine 53–cysteine 609, cysteine 108–cysteine 135, cysteine 121–cysteine 147, cysteine 511–cysteine 556, and cysteine 601–cysteine 608. The interval 54 to 201 is receptor-binding; that stretch reads RDKLSSTSQL…DFFQSPPLHE (148 aa). N-linked (GlcNAc...) asparagine; by host glycosylation is found at asparagine 204, asparagine 228, asparagine 257, asparagine 268, and asparagine 296. The segment at 305 to 485 is mucin-like region; that stretch reads ELSFVPVPET…LSGPGFLTNT (181 aa). Residues 356–463 are disordered; the sequence is IKGKDTMPTT…PTTLPEQHTA (108 aa). A compositionally biased stretch (low complexity) spans 361–374; that stretch reads TMPTTVTGVPTTTP. Polar residues predominate over residues 402-422; the sequence is TTQPAKTTSQPTNSTESTTLN. N-linked (GlcNAc...) asparagine; by host glycosylation occurs at asparagine 414. A compositionally biased stretch (low complexity) spans 423–440; it reads PTSEPSSRGTGPSSPTVP. N-linked (GlcNAc...) asparagine; by host glycosylation is present at asparagine 441. Polar residues predominate over residues 452 to 463; the sequence is TTPTTLPEQHTA. The interval 524–539 is fusion peptide; sequence GAAIGLAWIPYFGPAA. A coiled-coil region spans residues 554-595; it reads LICGLRQLANETTQALQLFLRATTELRTFSILNRKAIDFLLQ. An N-linked (GlcNAc...) asparagine; by host glycan is attached at asparagine 563. Residues 615-634 are a coiled coil; the sequence is WTKNITDKIDQIIHDFVDNN. Asparagine 618 carries N-linked (GlcNAc...) asparagine; by host glycosylation. The helical transmembrane segment at 651–671 threads the bilayer; sequence WVPAGIGITGVIIAIIALLCI. 2 S-palmitoyl cysteine; by host lipidation sites follow: cysteine 670 and cysteine 672. At 672-676 the chain is on the cytoplasmic side; the sequence is CKFML.

The protein belongs to the filoviruses glycoprotein family. In terms of assembly, homotrimer; each monomer consists of a GP1 and a GP2 subunit linked by disulfide bonds. The resulting peplomers (GP1,2) protrude from the virus surface as spikes. GP1 and GP2delta are part of GP1,2delta soluble complexes released by ectodomain shedding. GP1,2 interacts with host integrin ITGAV/alpha-V and CLEC10A. Also binds human CD209 and CLEC4M (collectively referred to as DC-SIGN(R)), as well as human FOLR1. Interacts with host entry receptor NPC1. Post-translationally, the signal peptide region modulates GP's high mannose glycosylation, thereby determining the efficiency of the interactions with DC-SIGN(R). N-glycosylated. In terms of processing, O-glycosylated in the mucin-like region. Post-translationally, palmitoylation of GP2 is not required for its function. Specific enzymatic cleavages in vivo yield mature proteins. The precursor is processed into GP1 and GP2 by host cell furin in the trans Golgi, and maybe by other host proteases, to yield the mature GP1 and GP2 proteins. The cleavage site corresponds to the furin optimal cleavage sequence [KR]-X-[KR]-R. This cleavage does not seem to be required for function. After the internalization of the virus into cell endosomes, GP1 C-terminus is removed by the endosomal proteases cathepsin B, cathepsin L, or both, leaving a 19-kDa N-terminal fragment which is further digested by cathepsin B. Proteolytic processing of GP1,2 by host ADAM17 can remove the transmembrane anchor of GP2 and leads to shedding of complexes consisting in GP1 and truncated GP2 (GP1,2delta).

The protein localises to the virion membrane. The protein resides in the host cell membrane. It localises to the secreted. In terms of biological role, GP1 is responsible for binding to the receptor(s) on target cells. Interacts with CD209/DC-SIGN and CLEC4M/DC-SIGNR which act as cofactors for virus entry into the host cell. Binding to CD209 and CLEC4M, which are respectively found on dendritic cells (DCs), and on endothelial cells of liver sinusoids and lymph node sinuses, facilitate infection of macrophages and endothelial cells. These interactions not only facilitate virus cell entry, but also allow capture of viral particles by DCs and subsequent transmission to susceptible cells without DCs infection (trans infection). Binding to the macrophage specific lectin CLEC10A also seems to enhance virus infectivity. Interaction with FOLR1/folate receptor alpha may be a cofactor for virus entry in some cell types, although results are contradictory. Members of the Tyro3 receptor tyrosine kinase family also seem to be cell entry factors in filovirus infection. Once attached, the virions are internalized through clathrin-dependent endocytosis and/or macropinocytosis. After internalization of the virus into the endosomes of the host cell, proteolysis of GP1 by two cysteine proteases, CTSB/cathepsin B and CTSL/cathepsin L presumably induces a conformational change of GP2, unmasking its fusion peptide and initiating membranes fusion. Functionally, GP2 acts as a class I viral fusion protein. Under the current model, the protein has at least 3 conformational states: pre-fusion native state, pre-hairpin intermediate state, and post-fusion hairpin state. During viral and target cell membrane fusion, the coiled coil regions (heptad repeats) assume a trimer-of-hairpins structure, positioning the fusion peptide in close proximity to the C-terminal region of the ectodomain. The formation of this structure appears to drive apposition and subsequent fusion of viral and target cell membranes. Responsible for penetration of the virus into the cell cytoplasm by mediating the fusion of the membrane of the endocytosed virus particle with the endosomal membrane. Low pH in endosomes induces an irreversible conformational change in GP2, releasing the fusion hydrophobic peptide. Its function is as follows. GP1,2 which is the disulfid-linked complex of GP1 and GP2, mediates endothelial cell activation and decreases endothelial barrier function. Mediates activation of primary macrophages. At terminal stages of the viral infection, when its expression is high, GP1,2 down-modulates the expression of various host cell surface molecules that are essential for immune surveillance and cell adhesion. Down-modulates integrins ITGA1, ITGA2, ITGA3, ITGA4, ITGA5, ITGA6, ITGAV and ITGB1. GP1,2 alters the cellular recycling of the dimer alpha-V/beta-3 via a dynamin-dependent pathway. Decrease in the host cell surface expression of various adhesion molecules may lead to cell detachment, contributing to the disruption of blood vessel integrity and hemorrhages developed during Ebola virus infection (cytotoxicity). This cytotoxicity appears late in the infection, only after the massive release of viral particles by infected cells. Down-modulation of host MHC-I, leading to altered recognition by immune cells, may explain the immune suppression and inflammatory dysfunction linked to Ebola infection. Also down-modulates EGFR surface expression. Counteracts the antiviral effect of host tetherin. GP2delta is part of the complex GP1,2delta released by host ADAM17 metalloprotease. This secreted complex may play a role in the pathogenesis of the virus by efficiently blocking the neutralizing antibodies that would otherwise neutralize the virus surface glycoproteins GP1,2. Might therefore contribute to the lack of inflammatory reaction seen during infection in spite the of extensive necrosis and massive virus production. GP1,2delta does not seem to be involved in activation of primary macrophages. This is Envelope glycoprotein (GP) from Tai Forest ebolavirus (strain Cote d'Ivoire-94) (TAFV).